The following is a 165-amino-acid chain: Protein NKG7 (165 aa).

Transmembrane regions (helical) follow at residues 9 to 29, 61 to 81, 92 to 112, and 133 to 153; these read LLTS…NFWF, FCIL…MSCI, IVST…MTVY, and FYLG…SLGA.

It belongs to the PMP-22/EMP/MP20 family.

The protein resides in the cell membrane. Its subcellular location is the cytolytic granule membrane. In terms of biological role, regulates cytotoxic granule exocytosis in effector lymphocytes, thus acting as a critical mediator of inflammation in a broad range of infectious and non-infectious diseases. Essential for cytotoxic degranulation of natural killer (NK) cells and CD8(+) T-cells and for the activation of CD4(+) T-cells following infection. Plays a critical role in CD8(+) T-cell and NK cell-mediated cytolysis of target cells and contributes to the cytolytic activity via the perforin/granzyme pathway by enhancing exocytosis of LAMP1-carrying lytic granules. Contributes to NK cell-mediated control of cancer metastasis. The chain is Protein NKG7 (NKG7) from Bos taurus (Bovine).